Consider the following 142-residue polypeptide: UPF0306 protein Ent638_3591 (142 aa).

This sequence belongs to the UPF0306 family.

The sequence is that of UPF0306 protein Ent638_3591 from Enterobacter sp. (strain 638).